The sequence spans 1047 residues: uncharacterized protein (1047 aa).

Lys-17 carries the post-translational modification N6-acetyllysine. Disordered regions lie at residues 172–208 and 236–283; these read PPCS…GSFS and RNSK…PQAL. At Ser-208 the chain carries Phosphoserine. Residues 237–254 are compositionally biased toward polar residues; sequence NSKQAMSEGPSSPWTQLA. Residues 268–283 are compositionally biased toward pro residues; that stretch reads HYPPPHHPPPHPPQAL. A phosphoserine mark is found at Ser-299 and Ser-391. At Thr-397 the chain carries Phosphothreonine. Disordered stretches follow at residues 448–469, 482–504, 519–567, 668–690, 714–763, 931–1004, and 1021–1047; these read EKLQ…DSPV, ECQS…PVID, PAPE…LRGS, PSTP…GPIG, VAVA…GDSL, EAGA…TLKA, and PTWG…SHHL. Ser-455, Ser-496, and Ser-497 each carry phosphoserine. Composition is skewed to low complexity over residues 729–741 and 751–762; these read PARA…ARDP and PAPASTSAPGDS. A phosphoserine mark is found at Ser-936, Ser-956, Ser-988, and Ser-996. Over residues 978 to 996 the composition is skewed to low complexity; the sequence is AAAGEESCGASPTPATSAS.

This is an uncharacterized protein from Homo sapiens (Human).